A 105-amino-acid polypeptide reads, in one-letter code: Small ribosomal subunit protein uS10 (105 aa).

It belongs to the universal ribosomal protein uS10 family. As to quaternary structure, part of the 30S ribosomal subunit.

Functionally, involved in the binding of tRNA to the ribosomes. This is Small ribosomal subunit protein uS10 from Rickettsia peacockii (strain Rustic).